An 810-amino-acid chain; its full sequence is LPS-assembly protein LptD (810 aa).

Disordered regions lie at residues 1-26 (MTEQRRSPNKRANKPPALSGLSSRTG) and 54-79 (SAVPDIDQTESVVETAPEVPLAPPVS). The first 49 residues, 1 to 49 (MTEQRRSPNKRANKPPALSGLSSRTGRLPASALRPLVLAMAGLSVGAHA), serve as a signal peptide directing secretion.

It belongs to the LptD family. As to quaternary structure, component of the lipopolysaccharide transport and assembly complex. Interacts with LptE and LptA.

It is found in the cell outer membrane. Functionally, together with LptE, is involved in the assembly of lipopolysaccharide (LPS) at the surface of the outer membrane. This chain is LPS-assembly protein LptD, found in Cupriavidus pinatubonensis (strain JMP 134 / LMG 1197) (Cupriavidus necator (strain JMP 134)).